The following is a 236-amino-acid chain: Sugar fermentation stimulation protein homolog (236 aa).

The protein belongs to the SfsA family.

In Methylobacterium nodulans (strain LMG 21967 / CNCM I-2342 / ORS 2060), this protein is Sugar fermentation stimulation protein homolog.